Reading from the N-terminus, the 330-residue chain is Malate dehydrogenase (330 aa).

NAD(+) is bound at residue 15–21; it reads GAGGQIG. Residues R95 and R101 each coordinate substrate. Residues N108, Q115, and 132 to 134 each bind NAD(+); that span reads VGN. N134 and R165 together coordinate substrate. H190 acts as the Proton acceptor in catalysis.

The protein belongs to the LDH/MDH superfamily. MDH type 2 family.

The catalysed reaction is (S)-malate + NAD(+) = oxaloacetate + NADH + H(+). In terms of biological role, catalyzes the reversible oxidation of malate to oxaloacetate. This Corynebacterium jeikeium (strain K411) protein is Malate dehydrogenase.